The following is a 475-amino-acid chain: MATLYSQVPSVSAVFSLYTSFSAITMLFRTILNEIVPKRIREYIAMKAVDFFSSYFQSDFTFVIEQRWEFVENQTFRAAEVYLPTCLAGLSTGKLLVGSSNLKNPAAEPKLGIPVNTKIIDNFEGIHLEWTLHSVETKKYLPEKRYFHLTCKKEFREKIMTDYFTYLAKSAEKIMSHRENLKIYTYNQDRSKWESAIFEHHTTFETLAVEPDLKKTLIDDLDAFSKGKDFFKSVGRAWKRGYLLYGPPGTGKSSMVAAIANHMKYHIYDLQIQSVRDDGELREILTSTKNRSILLIEDIDCGADASRRRQSKKKEEDGGEDDGEPQKRKKKFEVGISLSGLLNFVDGLWSSCGEEKIIIFTTNHKEKLDPALLRPGRMDVHILMDNCTPFVFKKLVALYLKTDEHVLFDPIEKLILEVSSTPAEVTQQLMASKNADIALKGLAEFLENKKLKKGEDSSVEEEGEIEDAETKEAET.

A helical membrane pass occupies residues 11–28 (VSAVFSLYTSFSAITMLF). Residue Thr-85 is modified to Phosphothreonine. 246–253 (GPPGTGKS) contributes to the ATP binding site. Disordered regions lie at residues 306 to 328 (SRRRQSKKKEEDGGEDDGEPQKR) and 453 to 475 (KGEDSSVEEEGEIEDAETKEAET). Over residues 457–467 (SSVEEEGEIED) the composition is skewed to acidic residues.

The protein belongs to the AAA ATPase family. BCS1 subfamily. Mg(2+) serves as cofactor. Expressed in developing shoots.

Its subcellular location is the membrane. The catalysed reaction is ATP + H2O = ADP + phosphate + H(+). The polypeptide is AAA-ATPase At1g43910 (Arabidopsis thaliana (Mouse-ear cress)).